A 23-amino-acid chain; its full sequence is Magainin-B2 (23 aa).

Expressed by the skin glands.

It localises to the secreted. In terms of biological role, has antimicrobial activity against Gram-negative bacterium E.coli ATCC 25922 (MIC=50 uM) and against fungus C.albicans ATCC 90028 (MIC=100 uM). Has no hemolytic activity against human erythrocytes even at high concentrations. This chain is Magainin-B2, found in Xenopus borealis (Kenyan clawed frog).